Reading from the N-terminus, the 265-residue chain is 6-oxopurine nucleoside phosphorylase (265 aa).

Residues Ser-10, 49–50, and 82–83 contribute to the phosphate site; these read RH and SA. Disulfide bonds link Cys-136–Cys-202 and Cys-162–Cys-190. A substrate-binding site is contributed by Met-187. Position 188 (Thr-188) interacts with phosphate. 211 to 213 is a binding site for substrate; it reads NYA. An intrachain disulfide couples Cys-254 to Cys-256.

The protein belongs to the PNP/MTAP phosphorylase family. MTAP subfamily. As to quaternary structure, homohexamer. Dimer of a homotrimer.

It catalyses the reaction a purine D-ribonucleoside + phosphate = a purine nucleobase + alpha-D-ribose 1-phosphate. It carries out the reaction guanosine + phosphate = alpha-D-ribose 1-phosphate + guanine. The catalysed reaction is inosine + phosphate = alpha-D-ribose 1-phosphate + hypoxanthine. The protein operates within purine metabolism; purine nucleoside salvage. Functionally, purine nucleoside phosphorylase which is highly specific for 6-oxopurine nucleosides. Cleaves guanosine or inosine to respective bases and sugar-1-phosphate molecules. Involved in purine salvage. The sequence is that of 6-oxopurine nucleoside phosphorylase from Pyrococcus furiosus (strain ATCC 43587 / DSM 3638 / JCM 8422 / Vc1).